The following is a 187-amino-acid chain: Accessory gene regulator protein B (187 aa).

Helical transmembrane passes span 49–69 (IAYI…FYLI), 82–102 (FWCY…VLHF), 107–127 (TLMM…APAA), 143–163 (YFSI…KEPY), and 164–184 (TQFI…IYYS).

It belongs to the AgrB family.

It localises to the cell membrane. Its function is as follows. Essential for the production of a quorum sensing system signal molecule, the autoinducing peptide (AIP). This quorum sensing system is responsible for the regulation of the expression of virulence factor genes. Involved in the proteolytic processing of AgrD, the precursor of AIP. The sequence is that of Accessory gene regulator protein B from Staphylococcus aureus (strain MW2).